Consider the following 130-residue polypeptide: Small ribosomal subunit protein uS11 (130 aa).

It belongs to the universal ribosomal protein uS11 family. In terms of assembly, part of the 30S ribosomal subunit.

Its function is as follows. Located on the platform of the 30S subunit. In Ignicoccus hospitalis (strain KIN4/I / DSM 18386 / JCM 14125), this protein is Small ribosomal subunit protein uS11.